We begin with the raw amino-acid sequence, 49 residues long: uncharacterized protein (49 aa).

Residues 1–22 form the signal peptide; sequence MKLNAFHLVVVVLIVSIFSVSS.

It localises to the secreted. This is an uncharacterized protein from Dictyostelium discoideum (Social amoeba).